A 456-amino-acid chain; its full sequence is Perilipin-5 (456 aa).

A disordered region spans residues 1 to 20 (MSEDEAAQAPGPSLSEQDQQ). Residues 1–108 (MSEDEAAQAP…KLEEKLPFLQ (108 aa)) form an interaction with LIPE region. The essential for lipid droplet targeting stretch occupies residues 1–173 (MSEDEAAQAP…HFLPMTEEEL (173 aa)). Phosphoserine is present on residues Ser2, Ser148, and Ser324. Residues 185–456 (VGSVEEQRKH…KHTLMPELDF (272 aa)) are interaction with PNPLA2 and ABHD5. A disordered region spans residues 420–456 (AWQAQHGEGTVLSGNIPEEEPEPPSRPKHTLMPELDF). The recruits mitochondria at the lipid droplet surface stretch occupies residues 438–456 (EEPEPPSRPKHTLMPELDF).

It belongs to the perilipin family. Homooligomer. Interacts with PNPLA2; prevents interaction of PNPLA2 with ABHD5. Interacts with ABHD5; targets ABHD5 to lipid droplets and promotes interaction of ABHD5 with PNPLA2. Interacts with LIPE. Post-translationally, phosphorylated by PKA. Phosphorylated on serine in skeletal muscle at rest or upon lipolytic stimulation.

Its subcellular location is the lipid droplet. It is found in the cytoplasm. The protein resides in the mitochondrion. Its function is as follows. Lipid droplet-associated protein that maintains the balance between lipogenesis and lipolysis and also regulates fatty acid oxidation in oxidative tissues. Recruits mitochondria to the surface of lipid droplets and is involved in lipid droplet homeostasis by regulating both the storage of fatty acids in the form of triglycerides and the release of fatty acids for mitochondrial fatty acid oxidation. In lipid droplet triacylglycerol hydrolysis, plays a role as a scaffolding protein for three major key lipolytic players: ABHD5, PNPLA2 and LIPE. Reduces the triacylglycerol hydrolase activity of PNPLA2 by recruiting and sequestering PNPLA2 to lipid droplets. Phosphorylation by PKA enables lipolysis probably by promoting release of ABHD5 from the perilipin scaffold and by facilitating interaction of ABHD5 with PNPLA2. Also increases lipolysis through interaction with LIPE and upon PKA-mediated phosphorylation of LIPE. The chain is Perilipin-5 (Plin5) from Ovis aries (Sheep).